The sequence spans 447 residues: Glutamate--tRNA ligase 2 (447 aa).

A 'HIGH' region motif is present at residues 9–19 (PSPTGYLHIGN). The 'KMSKS' region signature appears at 240 to 244 (GLSKR). Position 243 (Lys-243) interacts with ATP.

This sequence belongs to the class-I aminoacyl-tRNA synthetase family. Glutamate--tRNA ligase type 1 subfamily. As to quaternary structure, monomer.

Its subcellular location is the cytoplasm. It catalyses the reaction tRNA(Glu) + L-glutamate + ATP = L-glutamyl-tRNA(Glu) + AMP + diphosphate. Catalyzes the attachment of glutamate to tRNA(Glu) in a two-step reaction: glutamate is first activated by ATP to form Glu-AMP and then transferred to the acceptor end of tRNA(Glu). The chain is Glutamate--tRNA ligase 2 from Methylobacterium sp. (strain 4-46).